Consider the following 410-residue polypeptide: Cytohesin-2 (410 aa).

Residues 13 to 56 (PEERMELENIRRRKQELLVEIQRLREELSEAMSEVEGLEANEGS) adopt a coiled-coil conformation. Residues 54-241 (EGSKTLQRNR…RNLYDSIRNE (188 aa)) enclose the SEC7 domain. The 128-residue stretch at 259 to 386 (NPDREGWLLK…WIKSIQAAVS (128 aa)) folds into the PH domain. A 1,2-diacyl-sn-glycero-3-phospho-(1D-myo-inositol-3,4,5-trisphosphate)-binding positions include 268-271 (KLGA), Arg290, Tyr301, Arg311, Lys349, Asn360, and His361. The tract at residues 397 to 405 (RKKRISVKK) is C-terminal autoinhibitory region.

Heteromer. Composed of TAMALIN, CYTH2 and at least one GRM1. Interacts with ARRB1. Interacts with ARL4D; the interaction is direct. Directly interacts with CCDC120 through the coiled coil domain; this interaction stabilizes CCDC120, possibly by preventing its ubiquitination, and is required for neurite growth in neuroblastoma cells. Interacts (via N-terminal domain) with INAVA (via N-terminal domain).

It localises to the cell membrane. It is found in the cytoplasm. The protein localises to the cell projection. The protein resides in the growth cone. Acts as a guanine-nucleotide exchange factor (GEF). Promotes guanine-nucleotide exchange on ARF1, ARF3 and ARF6. Promotes the activation of ARF factors through replacement of GDP with GTP. The cell membrane form, in association with ARL4 proteins, recruits ARF6 to the plasma membrane. Involved in neurite growth. This Bos taurus (Bovine) protein is Cytohesin-2 (CYTH2).